The chain runs to 372 residues: MNLSEISYRRVVVKLGTSVLTSGSLKLDKAHMVELARQMACLMKAGVEVVLCTSGAIAAGKEHLGYPQLPDTIASKQLLAAVGQSQLILAWSQLFSIYGLHVGQLLLTRADLHDRERYLNARDSLNALLNNGIIPIINENDAVATAEIKVGDNDNLSARAALLCDADLLILLTDQKGLFDADPRKNPDAKLITEVQNIDDSLRMLAGGAVSGLGTGGMATKLEAADIARRAGVEVVIASGHHKDVIQNVVCAKPVGTHFTALEHPLESRKQWILAGPKARGQVVLDTGAITAVTQKGRSLLSKGIIEVNGLFQRGDTIELVDTKGKVYAKGMSRYGSLDVSKIAGKHSDNIEEILGYDYGDAVVHRNDMVVL.

Position 14 (lysine 14) interacts with ATP. Residues serine 54, aspartate 141, and asparagine 153 each contribute to the substrate site. Residues 173–174 (TD) and 215–221 (TGGMATK) contribute to the ATP site. A PUA domain is found at 280–358 (RGQVVLDTGA…DNIEEILGYD (79 aa)).

Belongs to the glutamate 5-kinase family.

The protein localises to the cytoplasm. It catalyses the reaction L-glutamate + ATP = L-glutamyl 5-phosphate + ADP. It participates in amino-acid biosynthesis; L-proline biosynthesis; L-glutamate 5-semialdehyde from L-glutamate: step 1/2. Functionally, catalyzes the transfer of a phosphate group to glutamate to form L-glutamate 5-phosphate. The sequence is that of Glutamate 5-kinase from Shewanella halifaxensis (strain HAW-EB4).